The sequence spans 782 residues: Cadherin-5 (782 aa).

The first 22 residues, 1–22, serve as a signal peptide directing secretion; it reads MQVLVMLLAAAGTYLGLLTAPT. Positions 23–44 are excised as a propeptide; it reads AASNPGRQDTPSTLPLHRRQKR. 5 consecutive Cadherin domains span residues 45-148, 149-255, 256-370, 371-475, and 476-592; these read DWIW…WPVF, TQLV…FPVF, TQTR…PPNF, KQPF…DNAP, and EFAK…MGAQ. The Extracellular portion of the chain corresponds to 45 to 598; that stretch reads DWIWNQMHID…MGAQVGVSIQ (554 aa). Residues E55 and E56 each coordinate Ca(2+). N58 is a glycosylation site (N-linked (GlcNAc...) asparagine). Residues D106, E108, D140, I141, N142, D143, and N144 each coordinate Ca(2+). N-linked (GlcNAc...) asparagine glycosylation is present at N154. D174, D176, H183, and D228 together coordinate Ca(2+). 4 N-linked (GlcNAc...) asparagine glycosylation sites follow: N360, N440, N522, and N534. A helical membrane pass occupies residues 599 to 619; that stretch reads ALVAIFLCILTIAVISLLVYL. The tract at residues 620–659 is required for interaction with PALS1; that stretch reads RRRLRKQARAHGKSVPEIHEQLVTYDEEGGGEMDTTSYDV. Topologically, residues 620 to 782 are cytoplasmic; it reads RRRLRKQARA…GSDPREELLY (163 aa).

In terms of assembly, part of a complex composed of AMOTL2, MAGI1 and CDH5, within the complex AMOTL2 acts as a scaffold protein for the interaction of MAGI1 with CDH5. The complex is required for coupling actin fibers to cell junctions in endothelial cells. Within the complex AMOTL2 (via its N-terminus) interacts with CDH5. Interacts (via cadherin 5 domain) with PTPRB. Interacts with TRPC4. Interacts with KRIT1. Interacts with PARD3. Interacts with RTN4 (isoform B). Interacts with PALS1; the interaction promotes PALS1 localization to cell junctions and is required for CDH5-mediated vascular lumen formation and endothelial cell. Interacts with CTNND1/p120-catenin; the interaction controls CADH5 endocytosis. Post-translationally, phosphorylated on tyrosine residues by KDR/VEGFR-2. Dephosphorylated by PTPRB. In terms of processing, O-glycosylated.

It is found in the cell junction. Its subcellular location is the adherens junction. The protein resides in the cell membrane. It localises to the cytoplasm. Functionally, cadherins are calcium-dependent cell adhesion proteins. They preferentially interact with themselves in a homophilic manner in connecting cells; cadherins may thus contribute to the sorting of heterogeneous cell types. This cadherin may play a important role in endothelial cell biology through control of the cohesion and organization of the intercellular junctions. It associates with alpha-catenin forming a link to the cytoskeleton. Plays a role in coupling actin fibers to cell junctions in endothelial cells, via acting as a cell junctional complex anchor for AMOTL2 and MAGI1. Acts in concert with KRIT1 and PALS1 to establish and maintain correct endothelial cell polarity and vascular lumen. These effects are mediated by recruitment and activation of the Par polarity complex and RAP1B. Required for activation of PRKCZ and for localization of phosphorylated PRKCZ, PARD3, TIAM1 and RAP1B to the cell junction. Associates with CTNND1/p120-catenin to control CADH5 endocytosis. The protein is Cadherin-5 of Sus scrofa (Pig).